The following is an 86-amino-acid chain: Mu-theraphotoxin-Cg2a 2 (86 aa).

The signal sequence occupies residues 1-21; that stretch reads MKVSVVITLAVLGVMFVWASA. Positions 22-50 are excised as a propeptide; the sequence is AELEERGSDQRDSPAWIKSMERIFQSEER. Disulfide bonds link Cys52–Cys66, Cys59–Cys71, and Cys65–Cys78. Residue Phe84 is modified to Phenylalanine amide.

This sequence belongs to the neurotoxin 10 (Hwtx-1) family. 37 (Jztx-31) subfamily. As to expression, expressed by the venom gland.

Its subcellular location is the secreted. Its function is as follows. Inhibits both peak current and fast inactivation of voltage-gated sodium channels (Nav) channels. Inhibits the inactivation of Nav on DRG neurons (EC(50)=1.77 uM) and peak current of cardiac myocytes (IC(50)=0.90 uM). This chain is Mu-theraphotoxin-Cg2a 2, found in Chilobrachys guangxiensis (Chinese earth tiger tarantula).